Here is a 1222-residue protein sequence, read N- to C-terminus: Chitin synthase 4 (1222 aa).

A disordered region spans residues 1-108 (MSLPERPGGI…NRIDKDHPNY (108 aa)). Over residues 51 to 68 (LSANSFAETIPSPNNSFV) the composition is skewed to polar residues. The N-linked (GlcNAc...) asparagine glycan is linked to asparagine 64. Residues 94–107 (IRPERNRIDKDHPN) show a composition bias toward basic and acidic residues. The N-linked (GlcNAc...) asparagine glycan is linked to asparagine 116. The segment at 136–199 (TTDVSGSRSQ…KSTKKRSTPQ (64 aa)) is disordered. Positions 137–154 (TDVSGSRSQTLDGVSDTS) are enriched in polar residues. The span at 176–196 (SAKRVSRHKSGKITKSTKKRS) shows a compositional bias: basic residues. A run of 2 helical transmembrane segments spans residues 204-224 (PPSF…DFML) and 242-262 (MGLI…TFGF). Residues asparagine 378 and asparagine 418 are each glycosylated (N-linked (GlcNAc...) asparagine). The chain crosses the membrane as a helical span at residues 509–529 (YVFLALILSVVGSRFVLALIF). Residues 595–662 (RFSTVYGPDR…PPSDGPGPAG (68 aa)) form a disordered region. Residues 608-643 (NKRVPTTMASSGGSGSQLLHPNSMYRQGNDSRSSFL) show a composition bias toward polar residues. Residues asparagine 636 and asparagine 1031 are each glycosylated (N-linked (GlcNAc...) asparagine). 3 consecutive transmembrane segments (helical) span residues 1056–1076 (FIVF…AFTF), 1090–1110 (VIPL…IVIT), and 1116–1136 (YLVW…VLPV). The interval 1201–1222 (GGGNSWSMPPGHQYHDDYYSDA) is disordered. A compositionally biased stretch (basic and acidic residues) spans 1213 to 1222 (QYHDDYYSDA).

Belongs to the chitin synthase family. Class IV subfamily.

The protein resides in the cell membrane. The enzyme catalyses [(1-&gt;4)-N-acetyl-beta-D-glucosaminyl](n) + UDP-N-acetyl-alpha-D-glucosamine = [(1-&gt;4)-N-acetyl-beta-D-glucosaminyl](n+1) + UDP + H(+). In terms of biological role, polymerizes chitin, a structural polymer of the cell wall and septum, by transferring the sugar moiety of UDP-GlcNAc to the non-reducing end of the growing chitin polymer. Plays a role in cell wall integrity and is involved in tolerance to hyperosmotic conditions. Required to successfully penetrate the host plants and thus plays a key role in pathogenicity. This Verticillium dahliae (strain VdLs.17 / ATCC MYA-4575 / FGSC 10137) (Verticillium wilt) protein is Chitin synthase 4.